Reading from the N-terminus, the 59-residue chain is Three-finger toxin MS1 (59 aa).

4 disulfides stabilise this stretch: C3/C22, C17/C39, C41/C52, and C53/C58.

It belongs to the three-finger toxin family. Short-chain subfamily. Type I alpha-neurotoxin sub-subfamily. In terms of tissue distribution, expressed by the venom gland.

Its subcellular location is the secreted. In terms of biological role, produces peripheral paralysis by blocking neuromuscular transmission at the postsynaptic site. Binds to and inhibits the endogenous nicotinic acetylcholine receptors (nAChR) in human rhabdomyosarcoma TE 671 cell line with an IC(50) of 48.2 mM. This neurotoxin is lethal to mice by intraperitoneal injection and to zebrafish by injection at the back of the dorsolateral region. The polypeptide is Three-finger toxin MS1 (Micrurus surinamensis (Surinam coral snake)).